The following is a 411-amino-acid chain: Tyrosine--tRNA ligase (411 aa).

Residue Y33 participates in L-tyrosine binding. The 'HIGH' region motif lies at 38-47; that stretch reads PTAESLHLGN. Y160 and Q164 together coordinate L-tyrosine. The short motif at 222–226 is the 'KMSKS' region element; sequence KIGKS. K225 lines the ATP pocket. Residues 347–411 form the S4 RNA-binding domain; sequence SVIETLIKNK…KKQVILFKTV (65 aa).

It belongs to the class-I aminoacyl-tRNA synthetase family. TyrS type 1 subfamily. In terms of assembly, homodimer.

It is found in the cytoplasm. It catalyses the reaction tRNA(Tyr) + L-tyrosine + ATP = L-tyrosyl-tRNA(Tyr) + AMP + diphosphate + H(+). Catalyzes the attachment of tyrosine to tRNA(Tyr) in a two-step reaction: tyrosine is first activated by ATP to form Tyr-AMP and then transferred to the acceptor end of tRNA(Tyr). The sequence is that of Tyrosine--tRNA ligase from Mycoplasmopsis agalactiae (strain NCTC 10123 / CIP 59.7 / PG2) (Mycoplasma agalactiae).